Here is a 351-residue protein sequence, read N- to C-terminus: Serine protease inhibitor dipetalogastin (351 aa).

Residues Leu1 to Leu131 constitute a propeptide that is removed on maturation. Kazal-like domains lie at Lys19–Glu69, His72–Ala122, Leu131–Glu181, His184–Pro234, Gln240–Val289, and Gly297–Pro347. 18 disulfide bridges follow: Cys25–Cys50, Cys27–Cys46, Cys35–Cys67, Cys78–Cys103, Cys80–Cys99, Cys88–Cys120, Cys137–Cys162, Cys139–Cys158, Cys147–Cys179, Cys190–Cys215, Cys192–Cys211, Cys200–Cys232, Cys246–Cys271, Cys248–Cys267, Cys256–Cys287, Cys303–Cys328, Cys305–Cys324, and Cys313–Cys345.

Its subcellular location is the secreted. Thrombin inhibitor. Prevents blood clotting to allow insect to feed on blood. Also functions as an inhibitor of trypsin and plasmin. In Dipetalogaster maximus (Blood-sucking bug), this protein is Serine protease inhibitor dipetalogastin.